Here is a 399-residue protein sequence, read N- to C-terminus: Probable peptidoglycan glycosyltransferase FtsW (399 aa).

9 consecutive transmembrane segments (helical) span residues 19-39 (PLPV…VMIS), 61-81 (ILFA…PVSW), 85-105 (SGWL…TPLG), 114-134 (WIPM…CLIA), 160-180 (VLGV…TVVL), 198-218 (FMPL…TQPY), 285-305 (LLGA…GLVI), 314-334 (MAFG…QAGI), and 350-370 (LPLV…IAVI).

The protein belongs to the SEDS family. FtsW subfamily.

Its subcellular location is the cell inner membrane. It catalyses the reaction [GlcNAc-(1-&gt;4)-Mur2Ac(oyl-L-Ala-gamma-D-Glu-L-Lys-D-Ala-D-Ala)](n)-di-trans,octa-cis-undecaprenyl diphosphate + beta-D-GlcNAc-(1-&gt;4)-Mur2Ac(oyl-L-Ala-gamma-D-Glu-L-Lys-D-Ala-D-Ala)-di-trans,octa-cis-undecaprenyl diphosphate = [GlcNAc-(1-&gt;4)-Mur2Ac(oyl-L-Ala-gamma-D-Glu-L-Lys-D-Ala-D-Ala)](n+1)-di-trans,octa-cis-undecaprenyl diphosphate + di-trans,octa-cis-undecaprenyl diphosphate + H(+). It participates in cell wall biogenesis; peptidoglycan biosynthesis. Its function is as follows. Peptidoglycan polymerase that is essential for cell division. This is Probable peptidoglycan glycosyltransferase FtsW from Marinobacter nauticus (strain ATCC 700491 / DSM 11845 / VT8) (Marinobacter aquaeolei).